The sequence spans 466 residues: Alpha-1A adrenergic receptor (466 aa).

At 1–25 (MVFLSGNASDSSNCTHPPAPVNISK) the chain is on the extracellular side. Residues Asn7, Asn13, and Asn22 are each glycosylated (N-linked (GlcNAc...) asparagine). A helical transmembrane segment spans residues 26-51 (AILLGVILGGLILFGVLGNILVILSV). The Cytoplasmic segment spans residues 52 to 63 (ACHRHLHSVTHY). Residues 64–89 (YIVNLAVADLLLTSTVLPFSAIFEIL) traverse the membrane as a helical segment. The Extracellular portion of the chain corresponds to 90 to 99 (GYWAFGRVFC). A helical transmembrane segment spans residues 100-122 (NIWAAVDVLCCTASIISLCVISI). The Cytoplasmic portion of the chain corresponds to 123-143 (DRYIGVSYPLRYPTIVTQRRG). A helical membrane pass occupies residues 144–168 (LRALLCVWAFSLVISVGPLFGWRQP). Topologically, residues 169 to 181 (APDDETICQINEE) are extracellular. A helical transmembrane segment spans residues 182-205 (PGYVLFSALGSFYVPLTIILAMYC). At 206-272 (RVYVVAKRES…KFSREKKAAK (67 aa)) the chain is on the cytoplasmic side. Residues 273-297 (TLGIVVGCFVLCWLPFFLVMPIGSF) traverse the membrane as a helical segment. Topologically, residues 298–304 (FPDFKPP) are extracellular. The helical transmembrane segment at 305–329 (ETVFKIVFWLGYLNSCINPIIYPCS) threads the bilayer. The Cytoplasmic segment spans residues 330–466 (SQEFKKAFQN…ISLSENGEEV (137 aa)). A Nuclear localization signal motif is present at residues 334–349 (KKAFQNVLKIQCLRRK). Cys345 carries S-palmitoyl cysteine lipidation.

Belongs to the G-protein coupled receptor 1 family. Adrenergic receptor subfamily. ADRA1A sub-subfamily. Homo- and heterooligomer. Heterooligomerizes with ADRA1B homooligomers in cardiac myocytes. Interacts with CAVIN4. Abundant in liver, vas deferens, brain, and aorta, but not in heart.

Its subcellular location is the nucleus membrane. It is found in the cell membrane. The protein localises to the cytoplasm. It localises to the membrane. The protein resides in the caveola. This alpha-adrenergic receptor mediates its action by association with G proteins that activate a phosphatidylinositol-calcium second messenger system. Its effect is mediated by G(q) and G(11) proteins. Nuclear ADRA1A-ADRA1B heterooligomers regulate phenylephrine (PE)-stimulated ERK signaling in cardiac myocytes. This chain is Alpha-1A adrenergic receptor (ADRA1A), found in Oryctolagus cuniculus (Rabbit).